The chain runs to 430 residues: RNA polymerase-associated protein LEO1 (430 aa).

Residues 1 to 10 (MSSSEGNSDA) show a composition bias toward polar residues. Residues 1 to 128 (MSSSEGNSDA…SRGSLNDLQG (128 aa)) form a disordered region. The segment covering 18-30 (KSSTPSSRGSSPD) has biased composition (low complexity). Positions 99 to 119 (REGKPKESNTRARLSDSDAES) are enriched in basic and acidic residues. Coiled-coil stretches lie at residues 326–347 (TRRE…RTQM) and 409–429 (EEYR…DEES). Residues 349–430 (RNNFKVRGPR…QIVTSDEESD (82 aa)) are disordered.

The protein belongs to the LEO1 family. As to quaternary structure, component of the PAF1 complex which consists of at least cdc-73, ctr-9, leo-1, pafo-1 and rtfo-1.

Its subcellular location is the nucleus. The protein resides in the cytoplasm. Functionally, component of the PAF1 complex which is a multifunctional complex involved in transcription initiation via genetic interactions with TATA-binding proteins, elongation and transcription-coupled histone modification. The sequence is that of RNA polymerase-associated protein LEO1 from Caenorhabditis elegans.